The sequence spans 122 residues: Large ribosomal subunit protein uL14c (122 aa).

It belongs to the universal ribosomal protein uL14 family. Part of the 50S ribosomal subunit.

The protein resides in the plastid. It is found in the chloroplast. Its function is as follows. Binds to 23S rRNA. The polypeptide is Large ribosomal subunit protein uL14c (Chlorella vulgaris (Green alga)).